Here is a 396-residue protein sequence, read N- to C-terminus: Protein GTS1 (396 aa).

The 128-residue stretch at D14 to D141 folds into the Arf-GAP domain. Residues C30–C53 form a C4-type zinc finger. Residues D148–R161 show a composition bias toward basic and acidic residues. 2 disordered regions span residues D148–R194 and K233–I266. S153 carries the phosphoserine modification. Y181 bears the Phosphotyrosine mark. S184 and S187 each carry phosphoserine. In terms of domain architecture, UBA spans S193 to S234. Over residues S234 to T249 the composition is skewed to low complexity. S240 is modified (phosphoserine). T249 carries the phosphothreonine modification.

The protein localises to the nucleus. Functionally, appears to modulate the timing of budding to obtain an appropriate cell size independent of the DNA replication cycle. Transcription factor involved in both heat resistance and flocculation. The polypeptide is Protein GTS1 (GTS1) (Saccharomyces cerevisiae (strain ATCC 204508 / S288c) (Baker's yeast)).